A 484-amino-acid polypeptide reads, in one-letter code: Glutathione reductase (484 aa).

S32 and G33 together coordinate FAD. A glutathione-binding site is contributed by S32. Residue R39 participates in glutathione binding. Positions 52, 59, 60, and 68 each coordinate FAD. A disulfide bridge links C60 with C65. Position 122 (Y122) interacts with glutathione. A138 provides a ligand contact to FAD. NADP(+) contacts are provided by A204, I207, E210, R227, and R233. T242 contacts glutathione. Residue G293 coordinates NADP(+). D333 contributes to the FAD binding site. E339 provides a ligand contact to NADP(+). T341 lines the FAD pocket. R349 serves as a coordination point for glutathione. V374 is a binding site for NADP(+). K426 serves as a coordination point for glutathione. Residue H473 coordinates FAD. H473 serves as the catalytic Proton acceptor.

It belongs to the class-I pyridine nucleotide-disulfide oxidoreductase family. In terms of assembly, homodimer. FAD is required as a cofactor.

Its subcellular location is the cytoplasm. The protein resides in the mitochondrion. It catalyses the reaction 2 glutathione + NADP(+) = glutathione disulfide + NADPH + H(+). Functionally, catalyzes the reduction of glutathione disulfide (GSSG) to reduced glutathione (GSH). Constitutes the major mechanism to maintain a high GSH:GSSG ratio in the cytosol. The chain is Glutathione reductase (GLR1) from Kluyveromyces lactis (strain ATCC 8585 / CBS 2359 / DSM 70799 / NBRC 1267 / NRRL Y-1140 / WM37) (Yeast).